Here is a 208-residue protein sequence, read N- to C-terminus: Nitrate/nitrite response regulator protein homolog (208 aa).

Residues 6–122 (KVLLIDDHPL…TLLEQIKRIA (117 aa)) enclose the Response regulatory domain. 4-aspartylphosphate is present on Asp57. Residues 142–207 (EDNPLDSLTD…AATVLFFEQN (66 aa)) enclose the HTH luxR-type domain. A DNA-binding region (H-T-H motif) is located at residues 166 to 185 (NKQIAAQLFISEETVKVHIR).

Could activate the expression of a formate dehydrogenase operon and could repress the transcription of the fumarate reductase (frdABCD) operon. This Haemophilus influenzae (strain ATCC 51907 / DSM 11121 / KW20 / Rd) protein is Nitrate/nitrite response regulator protein homolog (narP).